Consider the following 495-residue polypeptide: Divinyl ether synthase CYP74M3 (495 aa).

C446 is a binding site for heme.

This sequence belongs to the cytochrome P450 family. Requires heme as cofactor.

The enzyme catalyses (13S)-hydroperoxy-(9Z,11E)-octadecadienoate = etheroleate + H2O. It catalyses the reaction (13S)-hydroperoxy-(9Z,11E,15Z)-octadecatrienoate = etherolenate + H2O. Its pathway is lipid metabolism; oxylipin biosynthesis. Functionally, divinyl ether synthase involved in oxylipin biosynthesis. Catalyzes the conversion of (13S)-hydroperoxy-(9Z,11E)-octadecadienoate (13-HPOD) to etheroleate and (13S)-hydroperoxy-(9Z,11E,15Z)-octadecatrienoate (13-HPOT) to etherolenate. Has no activity with the corresponding 9-hydroperoxides (9-HPOD and 9-HPOT). The protein is Divinyl ether synthase CYP74M3 of Selaginella moellendorffii (Spikemoss).